A 70-amino-acid polypeptide reads, in one-letter code: ATP synthase subunit c (70 aa).

2 consecutive transmembrane segments (helical) span residues 4-24 (IAAG…NGML) and 48-68 (ISMA…FVLI).

Belongs to the ATPase C chain family. F-type ATPases have 2 components, F(1) - the catalytic core - and F(0) - the membrane proton channel. F(1) has five subunits: alpha(3), beta(3), gamma(1), delta(1), epsilon(1). F(0) has three main subunits: a(1), b(2) and c(10-14). The alpha and beta chains form an alternating ring which encloses part of the gamma chain. F(1) is attached to F(0) by a central stalk formed by the gamma and epsilon chains, while a peripheral stalk is formed by the delta and b chains.

The protein localises to the cell membrane. F(1)F(0) ATP synthase produces ATP from ADP in the presence of a proton or sodium gradient. F-type ATPases consist of two structural domains, F(1) containing the extramembraneous catalytic core and F(0) containing the membrane proton channel, linked together by a central stalk and a peripheral stalk. During catalysis, ATP synthesis in the catalytic domain of F(1) is coupled via a rotary mechanism of the central stalk subunits to proton translocation. In terms of biological role, key component of the F(0) channel; it plays a direct role in translocation across the membrane. A homomeric c-ring of between 10-14 subunits forms the central stalk rotor element with the F(1) delta and epsilon subunits. This chain is ATP synthase subunit c, found in Oenococcus oeni (strain ATCC BAA-331 / PSU-1).